A 626-amino-acid chain; its full sequence is Biosynthetic arginine decarboxylase (626 aa).

K99 is subject to N6-(pyridoxal phosphate)lysine. 279–289 (VDVGGGLGVDY) provides a ligand contact to substrate.

The protein belongs to the Orn/Lys/Arg decarboxylase class-II family. SpeA subfamily. The cofactor is Mg(2+). Pyridoxal 5'-phosphate is required as a cofactor.

The enzyme catalyses L-arginine + H(+) = agmatine + CO2. Its pathway is amine and polyamine biosynthesis; agmatine biosynthesis; agmatine from L-arginine: step 1/1. In terms of biological role, catalyzes the biosynthesis of agmatine from arginine. The chain is Biosynthetic arginine decarboxylase from Chromobacterium violaceum (strain ATCC 12472 / DSM 30191 / JCM 1249 / CCUG 213 / NBRC 12614 / NCIMB 9131 / NCTC 9757 / MK).